Consider the following 225-residue polypeptide: Increased recombination centers protein 22 (225 aa).

The N-terminal stretch at 1–24 (MRFFMLIGFNLLTALSSFCAAISA) is a signal peptide. At 25-169 (NNSDNVEHEQ…PTLFEIVSPP (145 aa)) the chain is on the lumenal side. Residues 170-190 (ISFFNPQFLSVQVIFLAIIGG) form a helical membrane-spanning segment. Over 191 to 225 (VSYYYMKSKTNQRPSKKSATVKKVDESWLPETYKK) the chain is Cytoplasmic. The disordered stretch occupies residues 203-225 (RPSKKSATVKKVDESWLPETYKK). Basic and acidic residues predominate over residues 212–225 (KKVDESWLPETYKK).

It belongs to the IRC22 family.

It is found in the endoplasmic reticulum membrane. Functionally, is probably involved in a pathway contributing to genomic integrity. The sequence is that of Increased recombination centers protein 22 (IRC22) from Saccharomyces cerevisiae (strain AWRI1631) (Baker's yeast).